A 126-amino-acid polypeptide reads, in one-letter code: Probable DNA-directed RNA polymerase II subunit RPB11 (126 aa).

Belongs to the archaeal Rpo11/eukaryotic RPB11/RPC19 RNA polymerase subunit family. As to quaternary structure, component of the RNA polymerase II (Pol II) complex consisting of 12 subunits.

Its subcellular location is the nucleus. In terms of biological role, DNA-dependent RNA polymerase catalyzes the transcription of DNA into RNA using the four ribonucleoside triphosphates as substrates. Component of RNA polymerase II which synthesizes mRNA precursors and many functional non-coding RNAs. Pol II is the central component of the basal RNA polymerase II transcription machinery. It is composed of mobile elements that move relative to each other. RPB11 is part of the core element with the central large cleft. In Plasmodium chabaudi chabaudi, this protein is Probable DNA-directed RNA polymerase II subunit RPB11.